The sequence spans 911 residues: Brevican core protein (911 aa).

The N-terminal stretch at 1-22 is a signal peptide; the sequence is MAQLFLPLLAALVLAQAPAALA. An Ig-like V-type domain is found at 36 to 155; that stretch reads RVRIAGDAPL…SSDAVEVKVK (120 aa). 5 disulfides stabilise this stretch: Cys57–Cys137, Cys179–Cys250, Cys203–Cys224, Cys277–Cys352, and Cys301–Cys322. Asn130 is a glycosylation site (N-linked (GlcNAc...) asparagine). Link domains are found at residues 157-252 and 257-354; these read VVFL…YCYA and GELF…YCFR. Residue Asn337 is glycosylated (N-linked (GlcNAc...) asparagine). Residues 391 to 641 form a disordered region; sequence QLPQEATESE…PTDSASRGGV (251 aa). Phosphoserine is present on Ser418. Ser418 carries an O-linked (Xyl...) (chondroitin sulfate) serine glycan. Acidic residues predominate over residues 454–478; that stretch reads EEEEKYEDEEEKEEEEEEEEVEDEA. O-glycosylated at two sites regions lie at residues 520–530 and 540–545; these read SPLPDGESEAS and TETLPT. Residues 569–575 are O-glycosylated at one site; that stretch reads TGGPELS. Residues 612-627 are compositionally biased toward polar residues; the sequence is EDNSGRTAPAGTSVQA. Ala646 is lipidated: GPI-anchor amidated alanine. The EGF-like domain maps to 646 to 682; that stretch reads ASGDCVPSPCHNGGTCLEEEEGVRCLCLPGYGGDLCD. 8 cysteine pairs are disulfide-bonded: Cys650–Cys661, Cys655–Cys670, Cys672–Cys681, Cys688–Cys699, Cys716–Cys808, Cys784–Cys800, Cys815–Cys858, and Cys844–Cys871. The C-type lectin domain maps to 695–809; sequence FQGACYKHFS…CNYHLSYTCK (115 aa). One can recognise a Sushi domain in the interval 813-873; sequence VSCGPPPELP…WEAPQISCVP (61 aa). Ser905 and Ser906 each carry an O-linked (GalNAc...) serine glycan.

This sequence belongs to the aggrecan/versican proteoglycan family. In terms of assembly, interacts with TNR. O-glycosylated; contains chondroitin sulfate. O-glycosylated with a core 1 or possibly core 8 glycan. As to expression, expressed in the retina, specifically in the inner nuclear layer, inner plexiform layer and ganglion cell layer (at protein level). Detected in cerebrospinal fluid (at protein level). Detected in urine (at protein level).

The protein localises to the secreted. The protein resides in the extracellular space. It localises to the extracellular matrix. It is found in the membrane. May play a role in the terminally differentiating and the adult nervous system during postnatal development. Could stabilize interactions between hyaluronan (HA) and brain proteoglycans. This Homo sapiens (Human) protein is Brevican core protein (BCAN).